A 216-amino-acid chain; its full sequence is Transmembrane emp24 domain-containing protein eca (216 aa).

Residues 1–20 form the signal peptide; sequence MRDQFISLALILCVLHSACG. The Lumenal segment spans residues 21–182; the sequence is LYFHISETER…FRHTSESTNS (162 aa). One can recognise a GOLD domain in the interval 30–126; sequence RKCFIEEVPD…QLRVHLDIQV (97 aa). The stretch at 134 to 164 forms a coiled coil; sequence ANVAQKEKLTELQLRIRQLLDQVEQITKEQN. A helical membrane pass occupies residues 183 to 203; that stretch reads RVLWWSLAQTVVLVCMGFWQM. Topologically, residues 204-216 are cytoplasmic; sequence RHLKSFFEAKKLV. The Prevents secretion from ER motif lies at 213–216; that stretch reads KKLV.

It belongs to the EMP24/GP25L family.

It localises to the endoplasmic reticulum membrane. Its function is as follows. Eca and bai are essential, though not redundant, for dorsoventral patterning of the embryo. Specifically required during early embryogenesis for the activity of maternal tkv, while the zygotic tkv is not affected. Involved in Golgi organization. This Drosophila simulans (Fruit fly) protein is Transmembrane emp24 domain-containing protein eca.